The chain runs to 266 residues: MIYSRSRLPSEGEILIATVKQVFDYGSYITLDEYGGLQAFLPWSEVSSKWVKNIRDVLKENRKVVVKVIRVDRRKGTVDVSLKKVTDDERRKKNLQWKKIQRLDKILELVSQQLKLSEKDAWEQVAWKLEAKYGDPISAIERAVKEGEKILIDAGVPEIWIKPLLEEAAKHTEEKKVKMSGLITVKTSEPLGVQKIKEVMSKALENIEQDYESILNVKIYTIGAPRYRVDVVGTNPKDASEALNQIISNLIKIGKEENVDISVVKK.

The 72-residue stretch at glycine 12–lysine 83 folds into the S1 motif domain.

Belongs to the eIF-2-alpha family. Heterotrimer composed of an alpha, a beta and a gamma chain.

Functionally, eIF-2 functions in the early steps of protein synthesis by forming a ternary complex with GTP and initiator tRNA. The sequence is that of Translation initiation factor 2 subunit alpha from Saccharolobus islandicus (strain L.S.2.15 / Lassen #1) (Sulfolobus islandicus).